Consider the following 497-residue polypeptide: MINHEINKLLAFSLKKGLIQEDDKIYSSNMLAGLFNLDNFYFEEISDVPSTATAILNQLLAYAVKENLINDTVAERDLFDTKIMNCVMPRPSEVINNFNRLLNNSPKEATSYYYKLSIASNYIRKDRIDKNITWKTPTEYGDLDITINLSKPEKDPRDIAKAKLSKSTSYPKCLLCKENEGFYGNINHPARQTLRIIPLELNKSKWFLQYSPYTYYNEHCIILNNEHIPMKISRITFENLLSFIDILPHYFAGSNADLPIVGGSILSHDHYQGGRYTFAMEKAPVEKEYSIKGYEDISVGRVKWPMSVIRISSKNKTKLINLAEHILTSWRNYSDKTQSILSHTGSEPHNTITPIARKRNEEYELDLVLRNNRTDENYPLGIFHPHNEVHHIKKENIGLIEVMGLAVLPARLKSELALIKENLIEKKKDISNDSTISKHNTWYKYILDNYKNISEENIDCILKKEVGIKFLEVLKHAGVFKRNSSGLSAFDKFINIL.

Belongs to the galactose-1-phosphate uridylyltransferase type 2 family.

The protein resides in the cytoplasm. The catalysed reaction is alpha-D-galactose 1-phosphate + UDP-alpha-D-glucose = alpha-D-glucose 1-phosphate + UDP-alpha-D-galactose. It functions in the pathway carbohydrate metabolism; galactose metabolism. The chain is Galactose-1-phosphate uridylyltransferase from Clostridium acetobutylicum (strain ATCC 824 / DSM 792 / JCM 1419 / IAM 19013 / LMG 5710 / NBRC 13948 / NRRL B-527 / VKM B-1787 / 2291 / W).